We begin with the raw amino-acid sequence, 139 residues long: NADH-quinone oxidoreductase subunit A (139 aa).

3 helical membrane passes run G16 to L36, L69 to V89, and V94 to V114.

The protein belongs to the complex I subunit 3 family. NDH-1 is composed of 14 different subunits. Subunits NuoA, H, J, K, L, M, N constitute the membrane sector of the complex.

It localises to the cell inner membrane. The catalysed reaction is a quinone + NADH + 5 H(+)(in) = a quinol + NAD(+) + 4 H(+)(out). NDH-1 shuttles electrons from NADH, via FMN and iron-sulfur (Fe-S) centers, to quinones in the respiratory chain. The immediate electron acceptor for the enzyme in this species is believed to be ubiquinone. Couples the redox reaction to proton translocation (for every two electrons transferred, four hydrogen ions are translocated across the cytoplasmic membrane), and thus conserves the redox energy in a proton gradient. The polypeptide is NADH-quinone oxidoreductase subunit A (Chromohalobacter salexigens (strain ATCC BAA-138 / DSM 3043 / CIP 106854 / NCIMB 13768 / 1H11)).